The chain runs to 368 residues: MARERRDSKAATFFCLAWALCLALPGYPQHVSGREDRADWTQEKYSHRPTILNATCILQVTSQTNVSRMWQNDLHPILIERYPGSPGSYAVRQHIKHRLQGLQAGWLVEEDTFQSHTPYGYRTFSNIISTLNPLAKRHLVIACHYDSKYFPPQLDGKVFVGATDSAVPCAMMLELARSLDRPLSFLKQSSLPPKADLSLKLIFFDGEEAFVRWSPSDSLYGSRSLAQKMASTPHPPGARNTYQIRGIDLFVLLDLIGARNPVFPVYFLNTARWFGRLEAIERNLNDLGLLNNYSSERQYFRSNLRRHPVEDDHIPFLRRGVPILHLIPSPFPRVWHTMEDNEENLDKPTIDNLSKILQVFVLEYLNLG.

The signal sequence occupies residues 1 to 23 (MARERRDSKAATFFCLAWALCLA). N-linked (GlcNAc...) asparagine glycosylation is found at Asn-53 and Asn-65. Residues Cys-143 and Cys-169 are joined by a disulfide bond. A Zn(2+)-binding site is contributed by Asp-164. The active-site Proton acceptor is the Glu-207. Glu-208 contributes to the Zn(2+) binding site. Asp-254 functions as the Proton acceptor in the catalytic mechanism. Asn-292 carries N-linked (GlcNAc...) asparagine glycosylation. His-336 serves as a coordination point for Zn(2+). Asn-352 carries an N-linked (GlcNAc...) asparagine glycan.

The protein belongs to the glutaminyl-peptide cyclotransferase family. As to expression, expressed by the venom gland.

The protein resides in the secreted. The catalysed reaction is N-terminal L-glutaminyl-[peptide] = N-terminal 5-oxo-L-prolyl-[peptide] + NH4(+). Its function is as follows. Responsible for the biosynthesis of pyroglutamyl peptides. Has a bias against acidic and tryptophan residues adjacent to the N-terminal glutaminyl residue and a lack of importance of chain length after the second residue. Also catalyzes N-terminal pyroglutamate formation. This chain is Glutaminyl-peptide cyclotransferase (QPCT), found in Bothrops jararaca (Jararaca).